A 575-amino-acid polypeptide reads, in one-letter code: G protein-coupled receptor kinase 4 (575 aa).

Residue Met1 is modified to N-acetylmethionine. An N-terminal region spans residues 1 to 153; that stretch reads MELENFMANT…DCAGVIYKYL (153 aa). The RGS domain occupies 51–171; that stretch reads DFSSLCDQQP…QESTYYNRFL (121 aa). A Protein kinase domain is found at 186–448; sequence FRQYRVLGKG…ASAVKQHPIF (263 aa). ATP-binding positions include 192-200 and Lys215; that span reads LGKGGFGEV. The Proton acceptor role is filled by Asp311. Positions 449–514 constitute an AGC-kinase C-terminal domain; the sequence is KDINFSRLEA…GCVTIPWQNE (66 aa). Ser484 is modified (phosphoserine).

This sequence belongs to the protein kinase superfamily. AGC Ser/Thr protein kinase family. GPRK subfamily. As to quaternary structure, interacts with DRD3. Palmitoylated. Isoform GRK4A is expressed in testis. Isoform GRK4B is heterogeneously distributed in the kidney, with 20-fold enrichment in the outer medulla. Has a widespread but low level of expression in tissues other than testis.

The protein resides in the cytoplasm. Its subcellular location is the cell cortex. The catalysed reaction is [G-protein-coupled receptor] + ATP = [G-protein-coupled receptor]-phosphate + ADP + H(+). Inhibited by heparin. Functionally, specifically phosphorylates the activated forms of G protein-coupled receptors. Plays an important role in the regulation of renal sodium handling and blood pressure. The chain is G protein-coupled receptor kinase 4 (Grk4) from Rattus norvegicus (Rat).